Consider the following 644-residue polypeptide: MFQDNPLLAQLKQQLHTQTPRVEGVVKGTEKGFGFLEVDGQKSYFIPPPQMKKVMHGDRIIATLHTDKDREIAEPETLVEPFLSRFVGRVQRKDDRLSIVPDHPLLRDAIQCRPVRELTHDFQSGDWAVAEMRRHPLKGDRGFNADLTAFITDGEDHFVPWWVTLARHNLEREAPVMVESALHDANLQREDLTALNFVTIDSASTEDMDDALQVQDNGDGSLLLTIAIADPTAYVDENSELDLIARKRAFTNYLPGFNIPMLPRDLSDNLCSLRPNERRPVLVCRVTIAADGTLGEDIHFSAAWVESKAKLVYDEVSDWLEGSGDWQPQNADIAEQITLLKRVCEARSHWREQHALVFKDRPDYRFLLGEKGEVLDIIVEHRRIANRIVEECMIAANVCAAIALRDNLGFGIYNVHTGFDPALVEQAANVLQANGVEADPQALLTLPGFCELRRHLDALPTQFLDSRIRRFQTFAEISTVPGPHFGLGLEAYATWTSPIRKYGDMVNHRLLKAIITGQQAEKPQDEITVQLAERRRLNRMAERDVGDWLYARYLQPMAGTDTRFPAEIIDVTRGGLRVRLLDNGAVAFIPAPFIHAVRDEMVCSQETGTVQIKGETVYSQSDKIEVRIAEVRMETRNVVARPVV.

Residues 189-516 form the RNB domain; that stretch reads REDLTALNFV…NHRLLKAIIT (328 aa). An S1 motif domain is found at 561–643; the sequence is DTRFPAEIID…ETRNVVARPV (83 aa).

The protein belongs to the RNR ribonuclease family. RNase II subfamily.

The protein resides in the cytoplasm. The enzyme catalyses Exonucleolytic cleavage in the 3'- to 5'-direction to yield nucleoside 5'-phosphates.. Its function is as follows. Involved in mRNA degradation. Hydrolyzes single-stranded polyribonucleotides processively in the 3' to 5' direction. This is Exoribonuclease 2 from Yersinia enterocolitica serotype O:8 / biotype 1B (strain NCTC 13174 / 8081).